The sequence spans 270 residues: Beta carbonic anhydrase 1 (270 aa).

4 residues coordinate Zn(2+): Cys39, Asp41, His105, and Cys108.

Belongs to the beta-class carbonic anhydrase family. Requires Zn(2+) as cofactor.

It catalyses the reaction hydrogencarbonate + H(+) = CO2 + H2O. Reversible hydration of carbon dioxide. This Caenorhabditis briggsae protein is Beta carbonic anhydrase 1.